Reading from the N-terminus, the 508-residue chain is Protein FAM227B (508 aa).

Disordered stretches follow at residues 1 to 22 (MAGQ…MQEP) and 485 to 508 (ASLS…EEEY). A compositionally biased stretch (low complexity) spans 486-497 (SLSSSSSSSPSS).

The protein belongs to the FAM227 family.

The chain is Protein FAM227B (FAM227B) from Homo sapiens (Human).